We begin with the raw amino-acid sequence, 3387 residues long: Genome polyprotein (3387 aa).

Residues 1–100 (MNQRKKVVRP…LNILNGRKRS (100 aa)) are Cytoplasmic-facing. The hydrophobic; homodimerization of capsid protein C stretch occupies residues 36–71 (LFSGKGPLRMVLAFITFLRVLSIPPTAGILKRWGQL). A propeptide spans 100-113 (STVTLLCLIPTVMA) (ER anchor for the capsid protein C, removed in mature form by serine protease NS3). A helical membrane pass occupies residues 101-117 (TVTLLCLIPTVMAFHLS). Over 118–237 (TRDGEPLMIV…GAWKHAQRVE (120 aa)) the chain is Extracellular. Asn182 carries N-linked (GlcNAc...) asparagine; by host glycosylation. A helical membrane pass occupies residues 238–258 (SWILRNPGFALLAGFMAYMIG). Over 259–265 (QTGIQRT) the chain is Cytoplasmic. The chain crosses the membrane as a helical span at residues 266 to 279 (VFFVLMMLVAPSYG). The Extracellular portion of the chain corresponds to 280–725 (MRCIGVGNRD…HQVFGSVYTT (446 aa)). Disulfide bonds link Cys282–Cys309, Cys339–Cys400, Cys353–Cys384, and Cys371–Cys395. Residue Asn346 is glycosylated (N-linked (GlcNAc...) asparagine; by host). Positions 377 to 390 (DRGWGNGCGLFGKG) are fusion peptide. Residue Asn432 is glycosylated (N-linked (GlcNAc...) asparagine; by host). Cystine bridges form between Cys464–Cys564 and Cys581–Cys612. A helical transmembrane segment spans residues 726–746 (MFGGVSWMVRILIGLLVLWIG). The Cytoplasmic segment spans residues 747–751 (TNSRN). The chain crosses the membrane as a helical span at residues 752–772 (TPMAMTCIAVGGITLFLGFTV). Residues 773-1193 (QADMGCVVSW…IMLGDTMLSR (421 aa)) are Extracellular-facing. 6 disulfide bridges follow: Cys778–Cys789, Cys829–Cys917, Cys953–Cys997, Cys1054–Cys1103, Cys1065–Cys1087, and Cys1086–Cys1090. 2 N-linked (GlcNAc...) asparagine; by host glycosylation sites follow: Asn904 and Asn981. The chain crosses the membrane as a helical span at residues 1194 to 1218 (VGGQTHLAIMIVFKMSPGYVLGVFL). Topologically, residues 1219–1224 (RKLTSR) are lumenal. Residues 1225 to 1243 (ETALMVIGMAMTTVFSIPH) traverse the membrane as a helical segment. Residues 1244 to 1267 (DLMELIDGISLGLILLKMVTHFDN) are Cytoplasmic-facing. Residues 1268–1288 (TQVGTLALSLTFIRSTMPLTM) form a helical membrane-spanning segment. Position 1289 (Ala1289) is a topological domain, lumenal. Residues 1290–1308 (WRTIMAVLFAVTLIPLCRT) traverse the membrane as a helical segment. Topologically, residues 1309 to 1316 (SCLQKQSH) are lumenal. Residues 1317 to 1337 (WVEITAIILGAQALPVYLMTL) form a helical membrane-spanning segment. The Cytoplasmic segment spans residues 1338-1345 (MKGASKRS). Residues 1346–1366 (WPLNEGIMAVGLVSLLGSALL) form a helical membrane-spanning segment. At 1367 to 1369 (KND) the chain is on the lumenal side. Residues 1370–1390 (VPLAGPMVAGGLLLAAYVMSG) form a helical membrane-spanning segment. Over 1391-1444 (SSADLSLERAANVQWDEMADITGSSPIIEVKQDEDGSFSIRDVEETNMITLLVK) the chain is Cytoplasmic. An interacts with and activates NS3 protease region spans residues 1397-1436 (LERAANVQWDEMADITGSSPIIEVKQDEDGSFSIRDVEET). Residues 1445-1465 (LALITVSGLYPLAIPITMTLW) constitute an intramembrane region (helical). The Cytoplasmic portion of the chain corresponds to 1466–2146 (YMWQVRTQRS…LNELPESLET (681 aa)). Positions 1475 to 1652 (SGALWDVPSP…ERIGEPDYEV (178 aa)) constitute a Peptidase S7 domain. Catalysis depends on charge relay system; for serine protease NS3 activity residues His1525, Asp1549, and Ser1609. The region spanning 1654–1810 (EDIFRKKRLT…QSNSPIEDIE (157 aa)) is the Helicase ATP-binding domain. Positions 1658 to 1661 (RKKR) are important for RNA-binding. Residue 1667–1674 (LHPGAGKT) coordinates ATP. Positions 1758–1761 (DEAH) match the DEAH box motif. Residues 1820-1987 (TGFDWITDYQ…IIPTLFGPER (168 aa)) form the Helicase C-terminal domain. Lys1862 carries the N6-acetyllysine; by host modification. Residues 2147–2167 (LMLVALLGAMTAGIFLFFMQG) traverse the membrane as a helical segment. The Lumenal portion of the chain corresponds to 2168–2169 (KG). Positions 2170-2190 (IGKLSVGLIAIAVASGLLWVA) form an intramembrane region, helical. Residue Glu2191 is a topological domain, lumenal. The chain crosses the membrane as a helical span at residues 2192–2212 (IQPQWIAASIILEFFLMVLLI). The Cytoplasmic portion of the chain corresponds to 2213–2225 (PEPEKQRTPQDNQ). A helical membrane pass occupies residues 2226–2246 (LIYVILAILTIIGLVAANEMG). The Lumenal portion of the chain corresponds to 2247–2270 (LIEKTKADFGFYQVKTETTILDVD). Positions 2271-2291 (LRPASAWTLYAVATTILTPML) form an intramembrane region, helical. Residues 2292 to 2301 (RHTIENTSAN) lie on the Lumenal side of the membrane. Residues Asn2297 and Asn2301 are each glycosylated (N-linked (GlcNAc...) asparagine; by host). The helical intramembrane region spans 2302 to 2322 (LSLAAIANQAAVLMGLGKGWP). At 2323–2343 (LHRMDLGVPLLAMGCYSQVNP) the chain is on the lumenal side. Residues 2344–2364 (TTLTASLVMLLVHYAIIGPGL) form a helical membrane-spanning segment. The Cytoplasmic segment spans residues 2365 to 2409 (QAKATREAQKRTAAGIMKNPTVDGITVIDLEPISYDPKFEKQLGQ). Residues 2410–2430 (VMLLVLCAGQLLLMRTTWAFC) traverse the membrane as a helical segment. Residues 2431 to 2455 (EVLTLATGPVLTLWEGNPGRFWNTT) lie on the Lumenal side of the membrane. Residue Asn2453 is glycosylated (N-linked (GlcNAc...) asparagine; by host). A helical membrane pass occupies residues 2456–2476 (IAVSTANIFRGSYLAGAGLAF). Over 2477-3387 (SLIKNAQTPR…SALSESEGVL (911 aa)) the chain is Cytoplasmic. Positions 2489–2751 (TGTTGETLGE…DVDLGAGTRS (263 aa)) constitute an mRNA cap 0-1 NS5-type MT domain. Residue Ser2543 coordinates S-adenosyl-L-methionine. Phosphoserine is present on Ser2543. The active-site For 2'-O-MTase activity is the Lys2548. Residues 2564–2567 (VVDL) carry the SUMO-interacting motif motif. The S-adenosyl-L-methionine site is built by Gly2573, Trp2574, Thr2591, Lys2592, Asp2618, and Val2619. Asp2633 serves as the catalytic For 2'-O-MTase activity. Ile2634 provides a ligand contact to S-adenosyl-L-methionine. Residues Lys2668 and Glu2704 each act as for 2'-O-MTase activity in the active site. Tyr2706 is a binding site for S-adenosyl-L-methionine. Glu2925, His2929, Cys2934, and Cys2937 together coordinate Zn(2+). The RdRp catalytic domain occupies 3016 to 3166 (LMYADDTAGW…PLDERFSTSL (151 aa)). The Zn(2+) site is built by His3200, Cys3216, and Cys3335.

It in the N-terminal section; belongs to the class I-like SAM-binding methyltransferase superfamily. mRNA cap 0-1 NS5-type methyltransferase family. As to quaternary structure, homodimer. Interacts (via N-terminus) with host EXOC1 (via C-terminus); this interaction results in EXOC1 degradation through the proteasome degradation pathway. In terms of assembly, forms heterodimers with envelope protein E in the endoplasmic reticulum and Golgi. Homodimer; in the endoplasmic reticulum and Golgi. Interacts with protein prM. Interacts with non-structural protein 1. As to quaternary structure, homodimer; Homohexamer when secreted. Interacts with envelope protein E. In terms of assembly, interacts (via N-terminus) with serine protease NS3. Forms a heterodimer with serine protease NS3. May form homooligomers. As to quaternary structure, forms a heterodimer with NS2B. Interacts with NS4B. Interacts with unphosphorylated RNA-directed RNA polymerase NS5; this interaction stimulates RNA-directed RNA polymerase NS5 guanylyltransferase activity. Interacts with host SHFL. In terms of assembly, interacts with host MAVS; this interaction inhibits the synthesis of IFN-beta. Interacts with host SHFL. Interacts with host AUP1; the interaction occurs in the presence of Dengue virus NS4B and induces lipophagy which facilitates production of virus progeny particles. Interacts with serine protease NS3. As to quaternary structure, homodimer. Interacts with host STAT2; this interaction inhibits the phosphorylation of the latter, and, when all viral proteins are present (polyprotein), targets STAT2 for degradation. Interacts with serine protease NS3. Interacts with host PAF1 complex; the interaction may prevent the recruitment of the PAF1 complex to interferon-responsive genes, and thus reduces the immune response. Post-translationally, specific enzymatic cleavages in vivo yield mature proteins. Cleavages in the lumen of endoplasmic reticulum are performed by host signal peptidase, whereas cleavages in the cytoplasmic side are performed by serine protease NS3. Signal cleavage at the 2K-4B site requires a prior NS3 protease-mediated cleavage at the 4A-2K site. In terms of processing, cleaved in post-Golgi vesicles by a host furin, releasing the mature small envelope protein M, and peptide pr. This cleavage is incomplete as up to 30% of viral particles still carry uncleaved prM. N-glycosylated. Post-translationally, N-glycosylated. The excreted form is glycosylated and this is required for efficient secretion of the protein from infected cells. In terms of processing, acetylated by host KAT5. Acetylation modulates NS3 RNA-binding and unwinding activities and plays an important positive role for viral replication. Sumoylation of RNA-directed RNA polymerase NS5 increases NS5 protein stability allowing proper viral RNA replication. Post-translationally, phosphorylated on serines residues. This phosphorylation may trigger NS5 nuclear localization.

It localises to the virion. It is found in the host nucleus. The protein localises to the host cytoplasm. Its subcellular location is the host perinuclear region. The protein resides in the secreted. It localises to the virion membrane. It is found in the host endoplasmic reticulum membrane. The protein localises to the host mitochondrion. It carries out the reaction Selective hydrolysis of -Xaa-Xaa-|-Yaa- bonds in which each of the Xaa can be either Arg or Lys and Yaa can be either Ser or Ala.. It catalyses the reaction RNA(n) + a ribonucleoside 5'-triphosphate = RNA(n+1) + diphosphate. The catalysed reaction is a ribonucleoside 5'-triphosphate + H2O = a ribonucleoside 5'-diphosphate + phosphate + H(+). The enzyme catalyses ATP + H2O = ADP + phosphate + H(+). It carries out the reaction a 5'-end (5'-triphosphoguanosine)-ribonucleoside in mRNA + S-adenosyl-L-methionine = a 5'-end (N(7)-methyl 5'-triphosphoguanosine)-ribonucleoside in mRNA + S-adenosyl-L-homocysteine. It catalyses the reaction a 5'-end (N(7)-methyl 5'-triphosphoguanosine)-ribonucleoside in mRNA + S-adenosyl-L-methionine = a 5'-end (N(7)-methyl 5'-triphosphoguanosine)-(2'-O-methyl-ribonucleoside) in mRNA + S-adenosyl-L-homocysteine + H(+). Functionally, plays a role in virus budding by binding to the cell membrane and gathering the viral RNA into a nucleocapsid that forms the core of a mature virus particle. During virus entry, may induce genome penetration into the host cytoplasm after hemifusion induced by the surface proteins. Can migrate to the cell nucleus where it modulates host functions. Overcomes the anti-viral effects of host EXOC1 by sequestering and degrading the latter through the proteasome degradation pathway. In terms of biological role, inhibits RNA silencing by interfering with host Dicer. Its function is as follows. Prevents premature fusion activity of envelope proteins in trans-Golgi by binding to envelope protein E at pH6.0. After virion release in extracellular space, gets dissociated from E dimers. Acts as a chaperone for envelope protein E during intracellular virion assembly by masking and inactivating envelope protein E fusion peptide. prM is the only viral peptide matured by host furin in the trans-Golgi network probably to avoid catastrophic activation of the viral fusion activity in acidic Golgi compartment prior to virion release. prM-E cleavage is inefficient, and many virions are only partially matured. These uncleaved prM would play a role in immune evasion. Functionally, may play a role in virus budding. Exerts cytotoxic effects by activating a mitochondrial apoptotic pathway through M ectodomain. May display a viroporin activity. In terms of biological role, binds to host cell surface receptor and mediates fusion between viral and cellular membranes. Envelope protein is synthesized in the endoplasmic reticulum in the form of heterodimer with protein prM. They play a role in virion budding in the ER, and the newly formed immature particle is covered with 60 spikes composed of heterodimer between precursor prM and envelope protein E. The virion is transported to the Golgi apparatus where the low pH causes dissociation of PrM-E heterodimers and formation of E homodimers. prM-E cleavage is inefficient, and many virions are only partially matured. These uncleaved prM would play a role in immune evasion. Its function is as follows. Involved in immune evasion, pathogenesis and viral replication. Once cleaved off the polyprotein, is targeted to three destinations: the viral replication cycle, the plasma membrane and the extracellular compartment. Essential for viral replication. Required for formation of the replication complex and recruitment of other non-structural proteins to the ER-derived membrane structures. Excreted as a hexameric lipoparticle that plays a role against host immune response. Antagonizing the complement function. Binds to the host macrophages and dendritic cells. Inhibits signal transduction originating from Toll-like receptor 3 (TLR3). Disrupts the host endothelial glycocalyx layer of host pulmonary microvascular endothelial cells, inducing degradation of sialic acid and shedding of heparan sulfate proteoglycans. NS1 induces expression of sialidases, heparanase, and activates cathepsin L, which activates heparanase via enzymatic cleavage. These effects are probably linked to the endothelial hyperpermeability observed in severe dengue disease. Functionally, component of the viral RNA replication complex that functions in virion assembly and antagonizes the host immune response. In terms of biological role, required cofactor for the serine protease function of NS3. May have membrane-destabilizing activity and form viroporins. Its function is as follows. Displays three enzymatic activities: serine protease, NTPase and RNA helicase. NS3 serine protease, in association with NS2B, performs its autocleavage and cleaves the polyprotein at dibasic sites in the cytoplasm: C-prM, NS2A-NS2B, NS2B-NS3, NS3-NS4A, NS4A-2K and NS4B-NS5. NS3 RNA helicase binds RNA and unwinds dsRNA in the 3' to 5' direction. Regulates the ATPase activity of the NS3 helicase activity. NS4A allows NS3 helicase to conserve energy during unwinding. Plays a role in the inhibition of the host innate immune response. Interacts with host MAVS and thereby prevents the interaction between RIGI and MAVS. In turn, IFN-beta production is impaired. Interacts with host AUP1 which mediates induction of lipophagy in host cells and facilitates production of virus progeny particles. Functionally, functions as a signal peptide for NS4B and is required for the interferon antagonism activity of the latter. In terms of biological role, induces the formation of ER-derived membrane vesicles where the viral replication takes place. Inhibits interferon (IFN)-induced host STAT1 phosphorylation and nuclear translocation, thereby preventing the establishment of cellular antiviral state by blocking the IFN-alpha/beta pathway. Its function is as follows. Replicates the viral (+) and (-) RNA genome, and performs the capping of genomes in the cytoplasm. NS5 methylates viral RNA cap at guanine N-7 and ribose 2'-O positions. Besides its role in RNA genome replication, also prevents the establishment of cellular antiviral state by blocking the interferon-alpha/beta (IFN-alpha/beta) signaling pathway. Inhibits host TYK2 and STAT2 phosphorylation, thereby preventing activation of JAK-STAT signaling pathway. May reduce immune responses by preventing the recruitment of the host PAF1 complex to interferon-responsive genes. The protein is Genome polyprotein of Aedes aegypti (Yellowfever mosquito).